Here is a 372-residue protein sequence, read N- to C-terminus: Phospho-2-dehydro-3-deoxyheptonate aldolase, tyrosine-inhibited (372 aa).

This sequence belongs to the class-I DAHP synthase family.

It is found in the cytoplasm. The protein localises to the nucleus. It catalyses the reaction D-erythrose 4-phosphate + phosphoenolpyruvate + H2O = 7-phospho-2-dehydro-3-deoxy-D-arabino-heptonate + phosphate. It participates in metabolic intermediate biosynthesis; chorismate biosynthesis; chorismate from D-erythrose 4-phosphate and phosphoenolpyruvate: step 1/7. Its function is as follows. Stereospecific condensation of phosphoenolpyruvate (PEP) and D-erythrose-4-phosphate (E4P) giving rise to 3-deoxy-D-arabino-heptulosonate-7-phosphate (DAHP). This Schizosaccharomyces pombe (strain 972 / ATCC 24843) (Fission yeast) protein is Phospho-2-dehydro-3-deoxyheptonate aldolase, tyrosine-inhibited (aro4).